Here is a 343-residue protein sequence, read N- to C-terminus: MKSIRMLMVMLALDDLLKNPYETFRIADELRRELVGDTVTYVVNRNINFTDICINDCKFCSFRNRKKYLLSLDEIKQKVEEAVEFGCTELCIQGGLLPDADLDFYLSILQAVRDVDKKIHIHAFSPMEVVHAARNSGMTVEEVLKELKKEGLGSMPGTAAEILDDSIRALICPRKLKTAEWVEVIKTAHRVGIPTTATIMYGHIDTWEHRINHLLLIKKIQQETGGITELIPLPFMSKNNELGRYAKGSSGFDDLLMIAIARILLYPEIKNIQASWVKMGQKLAQAALHVGANDLGGTLMEENISKSAGATSGEFMHPEELRELIKIAGRVPKQRDTLYNILD.

In terms of domain architecture, Radical SAM core spans 39 to 268 (VTYVVNRNIN…AIARILLYPE (230 aa)). [4Fe-4S] cluster-binding residues include C53, C57, and C60.

Belongs to the radical SAM superfamily. CofH family. Consists of two subunits, CofG and CofH. [4Fe-4S] cluster serves as cofactor.

The enzyme catalyses 5-amino-6-(D-ribitylamino)uracil + L-tyrosine + S-adenosyl-L-methionine = 5-amino-5-(4-hydroxybenzyl)-6-(D-ribitylimino)-5,6-dihydrouracil + 2-iminoacetate + 5'-deoxyadenosine + L-methionine + H(+). The protein operates within cofactor biosynthesis; coenzyme F0 biosynthesis. In terms of biological role, catalyzes the radical-mediated synthesis of 5-amino-5-(4-hydroxybenzyl)-6-(D-ribitylimino)-5,6-dihydrouracil from 5-amino-6-(D-ribitylamino)uracil and L-tyrosine. The chain is 5-amino-6-(D-ribitylamino)uracil--L-tyrosine 4-hydroxyphenyl transferase from Archaeoglobus fulgidus (strain ATCC 49558 / DSM 4304 / JCM 9628 / NBRC 100126 / VC-16).